The chain runs to 285 residues: Pseudouridine-5'-phosphate glycosidase (285 aa).

E17 acts as the Proton donor in catalysis. Residues K77 and V97 each contribute to the substrate site. D126 contacts Mn(2+). Substrate is bound at residue 128-130 (SQD). K147 serves as the catalytic Nucleophile.

It belongs to the pseudouridine-5'-phosphate glycosidase family. In terms of assembly, homotrimer. Mn(2+) serves as cofactor.

It carries out the reaction D-ribose 5-phosphate + uracil = psi-UMP + H2O. Its function is as follows. Catalyzes the reversible cleavage of pseudouridine 5'-phosphate (PsiMP) to ribose 5-phosphate and uracil. Functions biologically in the cleavage direction, as part of a pseudouridine degradation pathway. The protein is Pseudouridine-5'-phosphate glycosidase of Thermotoga maritima (strain ATCC 43589 / DSM 3109 / JCM 10099 / NBRC 100826 / MSB8).